The sequence spans 357 residues: Peptide chain release factor 1 (357 aa).

Gln234 carries the N5-methylglutamine modification.

The protein belongs to the prokaryotic/mitochondrial release factor family. Post-translationally, methylated by PrmC. Methylation increases the termination efficiency of RF1.

It localises to the cytoplasm. Its function is as follows. Peptide chain release factor 1 directs the termination of translation in response to the peptide chain termination codons UAG and UAA. The sequence is that of Peptide chain release factor 1 from Frankia casuarinae (strain DSM 45818 / CECT 9043 / HFP020203 / CcI3).